Reading from the N-terminus, the 283-residue chain is Xyloglucan endotransglucosylase/hydrolase 2 (283 aa).

The first 30 residues, 1–30 (MAPSSAHNNGFYVLMLVGIVVSTMVATCAG), serve as a signal peptide directing secretion. The 190-residue stretch at 31–220 (SFYQDFDLTW…WSKAPFTAYY (190 aa)) folds into the GH16 domain. The active-site Nucleophile is the Glu-106. Glu-110 functions as the Proton donor in the catalytic mechanism. Residue Glu-110 participates in xyloglucan binding. N-linked (GlcNAc...) asparagine glycosylation occurs at Asn-114. Xyloglucan-binding positions include 123-125 (HTN), 133-135 (NRE), 199-200 (DW), Gly-204, and Arg-272. The cysteines at positions 267 and 281 are disulfide-linked.

This sequence belongs to the glycosyl hydrolase 16 family. Contains at least one intrachain disulfide bond essential for its enzymatic activity. In terms of processing, N-glycosylated; not essential for its enzymatic activity.

Its subcellular location is the secreted. It is found in the cell wall. It localises to the extracellular space. The protein localises to the apoplast. The enzyme catalyses breaks a beta-(1-&gt;4) bond in the backbone of a xyloglucan and transfers the xyloglucanyl segment on to O-4 of the non-reducing terminal glucose residue of an acceptor, which can be a xyloglucan or an oligosaccharide of xyloglucan.. Catalyzes xyloglucan endohydrolysis (XEH) and/or endotransglycosylation (XET). Cleaves and religates xyloglucan polymers, an essential constituent of the primary cell wall, and thereby participates in cell wall construction of growing tissues. This chain is Xyloglucan endotransglucosylase/hydrolase 2, found in Glycine max (Soybean).